Reading from the N-terminus, the 784-residue chain is Toll-like receptor 2 (784 aa).

Positions 1–20 (MPHTLWMVWVLGVIISLSKE) are cleaved as a signal peptide. At 21 to 587 (ESSNQASLSC…VRLSVSECHR (567 aa)) the chain is on the extracellular side. Cysteines 30 and 36 form a disulfide. LRR repeat units lie at residues 54-77 (VKSL…RCVN), 78-101 (LQAL…SLGS), 102-125 (LEHL…PLSS), 126-150 (LTFL…HLTK), 151-175 (LQIL…GLTF), 176-199 (LEEL…SIQN), 200-223 (VSHL…VTSS), 224-250 (VECL…TNSL), 251-278 (IKKF…QISG), 279-308 (LLEL…DPGK), 309-337 (VETL…LTER), 338-361 (VKRI…HLKS), 362-388 (LEYL…AWPS), 389-414 (LQTL…TLKN), 415-437 (LTNV…WPEK), 438-457 (MKYL…CIPK), 458-478 (TLEI…NLPQ), 479-500 (LKEL…LLPM), and 501-524 (LLVL…SFHT). An N-linked (GlcNAc...) asparagine glycan is attached at asparagine 114. An N-linked (GlcNAc...) asparagine glycan is attached at asparagine 199. Cysteine 353 and cysteine 382 form a disulfide bridge. The N-linked (GlcNAc...) asparagine glycan is linked to asparagine 414. Cysteine 432 and cysteine 454 form a disulfide bridge. N-linked (GlcNAc...) asparagine glycosylation is present at asparagine 442. Positions 525-579 (LKTLEAGGNNFICSCEFLSFTQEQQALAKVLIDWPANYLCDSPSHVRGQQVQDVR) constitute an LRRCT domain. A helical transmembrane segment spans residues 588 to 608 (TALVSGMCCALFLLILLTGVL). Topologically, residues 609–784 (CHRFHGLWYM…WVNLRAAIKS (176 aa)) are cytoplasmic. The 144-residue stretch at 639–782 (ICYDAFVSYS…GFWVNLRAAI (144 aa)) folds into the TIR domain. Residue lysine 754 forms a Glycyl lysine isopeptide (Lys-Gly) (interchain with G-Cter in ubiquitin) linkage. The ATG16L1-binding motif signature appears at 761 to 778 (YLEWPMDEAQREGFWVNL).

It belongs to the Toll-like receptor family. In terms of assembly, interacts with LY96, TLR1 and TLR6 (via extracellular domain). TLR2 seems to exist in heterodimers with either TLR1 or TLR6 before stimulation by the ligand. The heterodimers form bigger oligomers in response to their corresponding ligands as well as further heterotypic associations with other receptors such as CD14 and/or CD36. Binds MYD88 (via TIR domain). Interacts with TICAM1. Interacts with CNPY3. Interacts with ATG16L1. Interacts with PPP1R11. Interacts with TICAM2. Interacts with TIRAP. Ubiquitinated at Lys-754 by PPP1R11, leading to its degradation. Deubiquitinated by USP2. In terms of processing, glycosylation of Asn-442 is critical for secretion of the N-terminal ectodomain of TLR2.

It localises to the membrane. The protein localises to the cytoplasmic vesicle. Its subcellular location is the phagosome membrane. The protein resides in the membrane raft. Cooperates with LY96 to mediate the innate immune response to bacterial lipoproteins and other microbial cell wall components. Cooperates with TLR1 or TLR6 to mediate the innate immune response to bacterial lipoproteins or lipopeptides. Acts via MYD88 and TRAF6, leading to NF-kappa-B activation, cytokine secretion and the inflammatory response. May also promote apoptosis in response to lipoproteins. Forms activation clusters composed of several receptors depending on the ligand, these clusters trigger signaling from the cell surface and subsequently are targeted to the Golgi in a lipid-raft dependent pathway. Forms the cluster TLR2:TLR6:CD14:CD36 in response to diacylated lipopeptides and TLR2:TLR1:CD14 in response to triacylated lipopeptides. The chain is Toll-like receptor 2 (TLR2) from Gorilla gorilla gorilla (Western lowland gorilla).